The primary structure comprises 449 residues: MPHIKFDYSKVLDKFVAPHEVEYMQSQVTAADELIRKGTGAGSDFLGWLDLPENYDREEFDRILKAAEQIKSDSDVLVVIGIGGSYLGAKAAIDFLNHHFANLQTKEERKAPQILYAGNSISSTYLADLVEYVADKDFSVNVISKSGTTTEPAIAFRVFKELLVKKYGQEEANKRIYATTDRQKGAVKVEADANGWETFVVPDDIGGRFSVLTAVGLLPIAASGADIKALMEGANAARKDYTSDKLSENEAYQYAAVRNILYRKGYATEILVNYEPSLQYFSEWWKQLAGESEGKDQKGIYPTSANFSTDLHSLGQFIQEGTRIMFETVVRVDKPRKNVIIPTLEEDLDGLGYLQGKDVDFVNKKATDGVLLAHTDGDVPNMYVTLPEQDAFTLGYTIYFFELAIALSGYLNAINPFDQPGVEAYKRNMFALLGKPGFEELSKELNARL.

E291 serves as the catalytic Proton donor. Active-site residues include H312 and K426.

Belongs to the GPI family.

It is found in the cytoplasm. It catalyses the reaction alpha-D-glucose 6-phosphate = beta-D-fructose 6-phosphate. It participates in carbohydrate biosynthesis; gluconeogenesis. It functions in the pathway carbohydrate degradation; glycolysis; D-glyceraldehyde 3-phosphate and glycerone phosphate from D-glucose: step 2/4. Its function is as follows. Catalyzes the reversible isomerization of glucose-6-phosphate to fructose-6-phosphate. The chain is Glucose-6-phosphate isomerase from Streptococcus gordonii (strain Challis / ATCC 35105 / BCRC 15272 / CH1 / DL1 / V288).